We begin with the raw amino-acid sequence, 261 residues long: tRNA pseudouridine synthase A (261 aa).

D51 functions as the Nucleophile in the catalytic mechanism. Residue Y109 coordinates substrate.

It belongs to the tRNA pseudouridine synthase TruA family. As to quaternary structure, homodimer.

It catalyses the reaction uridine(38/39/40) in tRNA = pseudouridine(38/39/40) in tRNA. Functionally, formation of pseudouridine at positions 38, 39 and 40 in the anticodon stem and loop of transfer RNAs. In Shewanella halifaxensis (strain HAW-EB4), this protein is tRNA pseudouridine synthase A.